We begin with the raw amino-acid sequence, 270 residues long: Electron transfer flavoprotein subunit beta (270 aa).

The protein belongs to the ETF alpha-subunit/FixB family. In terms of assembly, heterodimer of an alpha and a beta subunit. FAD serves as cofactor.

The electron transfer flavoprotein serves as a specific electron acceptor for other dehydrogenases. It transfers the electrons to the main respiratory chain via ETF-ubiquinone oxidoreductase (ETF dehydrogenase). The polypeptide is Electron transfer flavoprotein subunit beta (etfB) (Megasphaera elsdenii).